The sequence spans 262 residues: 1-(5-phosphoribosyl)-5-[(5-phosphoribosylamino)methylideneamino] imidazole-4-carboxamide isomerase (262 aa).

The active-site Proton acceptor is the Asp8. Asp129 functions as the Proton donor in the catalytic mechanism. The interval 243-262 (KDNVGQEDHSLPRCEPGPRG) is disordered.

Belongs to the HisA/HisF family.

The protein resides in the cytoplasm. The enzyme catalyses 1-(5-phospho-beta-D-ribosyl)-5-[(5-phospho-beta-D-ribosylamino)methylideneamino]imidazole-4-carboxamide = 5-[(5-phospho-1-deoxy-D-ribulos-1-ylimino)methylamino]-1-(5-phospho-beta-D-ribosyl)imidazole-4-carboxamide. It participates in amino-acid biosynthesis; L-histidine biosynthesis; L-histidine from 5-phospho-alpha-D-ribose 1-diphosphate: step 4/9. This is 1-(5-phosphoribosyl)-5-[(5-phosphoribosylamino)methylideneamino] imidazole-4-carboxamide isomerase from Desulforudis audaxviator (strain MP104C).